Here is a 409-residue protein sequence, read N- to C-terminus: uncharacterized protein (409 aa).

The N-terminal stretch at 1–26 is a signal peptide; it reads MKKELLASLVLCLSLSPLVSTNEVFA.

This is an uncharacterized protein from Bacillus subtilis (strain 168).